The primary structure comprises 291 residues: Beta-lactamase CTX-M-4 (291 aa).

Positions 1–28 are cleaved as a signal peptide; the sequence is MMTQSIRRSMLTVMATLPLLFSSATLHA. S73 (acyl-ester intermediate) is an active-site residue. A substrate-binding site is contributed by 237–239; the sequence is KTG.

Belongs to the class-A beta-lactamase family.

It carries out the reaction a beta-lactam + H2O = a substituted beta-amino acid. Has cefotaxime-hydrolyzing activity. In Salmonella typhimurium, this protein is Beta-lactamase CTX-M-4 (bla).